The primary structure comprises 208 residues: Uracil phosphoribosyltransferase (208 aa).

Residues Arg78, Arg103, and 130 to 138 (DPMFATGGT) each bind 5-phospho-alpha-D-ribose 1-diphosphate. Residues Ile193 and 198–200 (GDA) contribute to the uracil site. A 5-phospho-alpha-D-ribose 1-diphosphate-binding site is contributed by Asp199.

Belongs to the UPRTase family. Requires Mg(2+) as cofactor.

The catalysed reaction is UMP + diphosphate = 5-phospho-alpha-D-ribose 1-diphosphate + uracil. It participates in pyrimidine metabolism; UMP biosynthesis via salvage pathway; UMP from uracil: step 1/1. Allosterically activated by GTP. Its function is as follows. Catalyzes the conversion of uracil and 5-phospho-alpha-D-ribose 1-diphosphate (PRPP) to UMP and diphosphate. The protein is Uracil phosphoribosyltransferase of Campylobacter jejuni (strain RM1221).